The sequence spans 555 residues: MGLSSPTLILAATVSLLGGIVFGYELGIISGALLVLKTVYQLTCFEQEALVSAVLFGALLASLIGGIIIDRWGRRTAILASNLVVLAGSIILIATSTFWWLIVGRVTIGFAISISSMACCIYVSEIVRPHQRGMLVSLYETGITVGILISYAMNYFLSGVNESWKYMFGLAIVPAAFQFISILFLPSKPHKLNFWEQDTDDGFIELEETGEAGEFKPDTYDRQYTFLDLFRSKDNMRTRTLLGLGLVLFQQFTGQPNVLYYASTIFQSVGFQSNSSAVLASVGLGVVKVASTLIAICFADKAGRRILLLAGCIVMTIAITGIGIVSFTVKMDSHRDCGSVTGRNMSSGESNVSQLLGIVHAETSTINTLDNSVHQLAMAIRSPSLANSASSNHKDLISQNSTVLPASPELPSNYTILNWITLLSMMAFVSAFSIGFGPMTWIVLSEIYPADIRGRAFAFCNSFNWAANLLITLTFLDVIASIGLSWTFLLYGVVGLLAIAFIYFFIPETKGQSLEEIDKQFSTKRILQKRETSKGVGKRPSSGPPYQRIGKASPS.

Over 1–15 (MGLSSPTLILAATVS) the chain is Cytoplasmic. The chain crosses the membrane as a helical span at residues 16-36 (LLGGIVFGYELGIISGALLVL). Residues 37 to 48 (KTVYQLTCFEQE) lie on the Extracellular side of the membrane. The chain crosses the membrane as a helical span at residues 49-69 (ALVSAVLFGALLASLIGGIII). At 70–82 (DRWGRRTAILASN) the chain is on the cytoplasmic side. A helical transmembrane segment spans residues 83–103 (LVVLAGSIILIATSTFWWLIV). Residues 104–105 (GR) lie on the Extracellular side of the membrane. A helical transmembrane segment spans residues 106–126 (VTIGFAISISSMACCIYVSEI). The Cytoplasmic segment spans residues 127–132 (VRPHQR). Residues 133 to 153 (GMLVSLYETGITVGILISYAM) form a helical membrane-spanning segment. At 154–165 (NYFLSGVNESWK) the chain is on the extracellular side. Asn161 carries N-linked (GlcNAc...) asparagine glycosylation. Residues 166 to 186 (YMFGLAIVPAAFQFISILFLP) form a helical membrane-spanning segment. The Cytoplasmic portion of the chain corresponds to 187–240 (SKPHKLNFWEQDTDDGFIELEETGEAGEFKPDTYDRQYTFLDLFRSKDNMRTRT). The helical transmembrane segment at 241–261 (LLGLGLVLFQQFTGQPNVLYY) threads the bilayer. 250-251 (QQ) lines the D-glucose pocket. Over 262 to 277 (ASTIFQSVGFQSNSSA) the chain is Extracellular. A glycan (N-linked (GlcNAc...) asparagine) is linked at Asn274. The chain crosses the membrane as a helical span at residues 278–298 (VLASVGLGVVKVASTLIAICF). Over 299 to 305 (ADKAGRR) the chain is Cytoplasmic. The helical transmembrane segment at 306-326 (ILLLAGCIVMTIAITGIGIVS) threads the bilayer. Topologically, residues 327–415 (FTVKMDSHRD…ASPELPSNYT (89 aa)) are extracellular. N-linked (GlcNAc...) asparagine glycosylation is found at Asn344, Asn351, Asn400, and Asn413. Residues 416–436 (ILNWITLLSMMAFVSAFSIGF) form a helical membrane-spanning segment. The Cytoplasmic segment spans residues 437–464 (GPMTWIVLSEIYPADIRGRAFAFCNSFN). D-glucose is bound at residue Trp441. The chain crosses the membrane as a helical span at residues 465 to 483 (WAANLLITLTFLDVIASIG). Residues 484–485 (LS) lie on the Extracellular side of the membrane. Residues 486 to 506 (WTFLLYGVVGLLAIAFIYFFI) traverse the membrane as a helical segment. The Cytoplasmic portion of the chain corresponds to 507–555 (PETKGQSLEEIDKQFSTKRILQKRETSKGVGKRPSSGPPYQRIGKASPS). The disordered stretch occupies residues 528 to 555 (QKRETSKGVGKRPSSGPPYQRIGKASPS).

It belongs to the major facilitator superfamily. Sugar transporter (TC 2.A.1.1) family. Glucose transporter subfamily.

It is found in the endomembrane system. The protein resides in the cytoplasm. The protein localises to the perinuclear region. The enzyme catalyses D-glucose(out) = D-glucose(in). In terms of biological role, facilitative glucose transporter required for the development of the cardiovascular system. The chain is Solute carrier family 2, facilitated glucose transporter member 10 from Xenopus tropicalis (Western clawed frog).